The primary structure comprises 329 residues: Transcription factor TGA2.3 (329 aa).

The interval 1–48 (MADMSPRTDTSTDDTDDNHMLEPGQLALAAASDSDRSKDKHEDQKTLR) is disordered. Basic and acidic residues predominate over residues 33-46 (DSDRSKDKHEDQKT). A bZIP domain is found at 43-87 (DQKTLRRLAQNREAARKSRLRKKAYVQQLENSRLKLTQLEQELQR). Residues 45–65 (KTLRRLAQNREAARKSRLRKK) are basic motif. Residues 71–85 (LENSRLKLTQLEQEL) form a leucine-zipper region. Residues 110-326 (ALAFDMEYAR…RALSSLWLAR (217 aa)) form the DOG1 domain.

It belongs to the bZIP family. In terms of assembly, interacts with NPR1/NH1 and NPR3/NH3.

It is found in the nucleus. Functionally, transcriptional regulator involved in defense response. The polypeptide is Transcription factor TGA2.3 (Oryza sativa subsp. japonica (Rice)).